We begin with the raw amino-acid sequence, 414 residues long: Esterase FrsA (414 aa).

This sequence belongs to the FrsA family.

It carries out the reaction a carboxylic ester + H2O = an alcohol + a carboxylate + H(+). Catalyzes the hydrolysis of esters. This is Esterase FrsA from Shigella flexneri serotype 5b (strain 8401).